Consider the following 259-residue polypeptide: Proteasome subunit alpha 1 (259 aa).

The disordered stretch occupies residues 231-259 (LVPAEPAAASESAPEPKPDTETKPADTQD). A compositionally biased stretch (low complexity) spans 233-243 (PAEPAAASESA). Residues 244–259 (PEPKPDTETKPADTQD) show a composition bias toward basic and acidic residues.

It belongs to the peptidase T1A family. As to quaternary structure, the 20S proteasome core is composed of 14 alpha and 14 beta subunits that assemble into four stacked heptameric rings, resulting in a barrel-shaped structure. The two inner rings, each composed of seven catalytic beta subunits, are sandwiched by two outer rings, each composed of seven alpha subunits. All four combinations of alpha- and beta-subunits (beta2-alpha1, beta2-alpha2, beta1-alpha2 and beta1-alpha1) yield fully assembled and proteolytically active proteasomes. The catalytic chamber with the active sites is on the inside of the barrel. Has probably a gated structure, the ends of the cylinder being occluded by the N-termini of the alpha-subunits. Is likely capped by the proteasome-associated ATPase, ARC. Post-translationally, the N-terminus is blocked.

The protein resides in the cytoplasm. It functions in the pathway protein degradation; proteasomal Pup-dependent pathway. The formation of the proteasomal ATPase ARC-20S proteasome complex, likely via the docking of the C-termini of ARC into the intersubunit pockets in the alpha-rings, may trigger opening of the gate for substrate entry. Interconversion between the open-gate and close-gate conformations leads to a dynamic regulation of the 20S proteasome proteolysis activity. In terms of biological role, component of the proteasome core, a large protease complex with broad specificity involved in protein degradation. The R.erythropolis proteasomes are able to cleave oligopeptides after Tyr, Phe and Leu, very poorly after Arg but not after Glu. Thus, displays chymotrypsin-like activity, low trypsin-like activity but no caspase-like activity. The polypeptide is Proteasome subunit alpha 1 (Rhodococcus erythropolis (Arthrobacter picolinophilus)).